The chain runs to 583 residues: 2-succinyl-5-enolpyruvyl-6-hydroxy-3-cyclohexene-1-carboxylate synthase (583 aa).

This sequence belongs to the TPP enzyme family. MenD subfamily. As to quaternary structure, homodimer. It depends on Mg(2+) as a cofactor. The cofactor is Mn(2+). Requires thiamine diphosphate as cofactor.

It carries out the reaction isochorismate + 2-oxoglutarate + H(+) = 5-enolpyruvoyl-6-hydroxy-2-succinyl-cyclohex-3-ene-1-carboxylate + CO2. Its pathway is quinol/quinone metabolism; 1,4-dihydroxy-2-naphthoate biosynthesis; 1,4-dihydroxy-2-naphthoate from chorismate: step 2/7. It functions in the pathway quinol/quinone metabolism; menaquinone biosynthesis. In terms of biological role, catalyzes the thiamine diphosphate-dependent decarboxylation of 2-oxoglutarate and the subsequent addition of the resulting succinic semialdehyde-thiamine pyrophosphate anion to isochorismate to yield 2-succinyl-5-enolpyruvyl-6-hydroxy-3-cyclohexene-1-carboxylate (SEPHCHC). This is 2-succinyl-5-enolpyruvyl-6-hydroxy-3-cyclohexene-1-carboxylate synthase from Roseiflexus sp. (strain RS-1).